The sequence spans 33 residues: Photosystem II reaction center protein Psb30 (33 aa).

The chain crosses the membrane as a helical span at residues Val-5–Ser-25.

Belongs to the Psb30/Ycf12 family. PSII is composed of 1 copy each of membrane proteins PsbA, PsbB, PsbC, PsbD, PsbE, PsbF, PsbH, PsbI, PsbJ, PsbK, PsbL, PsbM, PsbT, PsbX, PsbY, PsbZ, Psb30/Ycf12, peripheral proteins of the oxygen-evolving complex and a large number of cofactors. It forms dimeric complexes.

It localises to the plastid membrane. A core subunit of photosystem II (PSII), probably helps stabilize the reaction center. The chain is Photosystem II reaction center protein Psb30 from Aneura mirabilis (Parasitic liverwort).